The sequence spans 349 residues: MRTLIVDDSAFMRMAIRSMLASSPDIKIVGDACNGKEAVEKAKSLHPDVVIMDVNMPVMDGLTAVKTIMNTSPVPIIMFSTLTTEGSKEALEALHLGAIDFTAKSESHHDVNKAEKELVDKIRNIHSSNPNLLRLINMRKFKGEVVRGKWRCAGDFGILIGSSTGGPSSLEQVIPRLPGDLPAPVFVVQHMPEGGFCRQMAERLNFLSELEVKEARNNEKVTAGIVYVAPGGYHMTVRKALDVTRIKLIKSQPVHAVMPAVDVTAESMLAVYGKNIVASILTGMGFDGASGFKTIRDAGGSTIACSEDTCVIFGMPKAAIEAGAIDVVKPIFEIPEEIVKRLEAKCNGK.

A Response regulatory domain is found at 2–119; it reads RTLIVDDSAF…DVNKAEKELV (118 aa). D53 bears the 4-aspartylphosphate mark. The region spanning 158 to 345 is the CheB-type methylesterase domain; the sequence is ILIGSSTGGP…EEIVKRLEAK (188 aa). Active-site residues include S163, H190, and D287.

Belongs to the CheB family. Phosphorylated by CheA. Phosphorylation of the N-terminal regulatory domain activates the methylesterase activity.

Its subcellular location is the cytoplasm. The catalysed reaction is [protein]-L-glutamate 5-O-methyl ester + H2O = L-glutamyl-[protein] + methanol + H(+). It catalyses the reaction L-glutaminyl-[protein] + H2O = L-glutamyl-[protein] + NH4(+). Functionally, involved in chemotaxis. Part of a chemotaxis signal transduction system that modulates chemotaxis in response to various stimuli. Catalyzes the demethylation of specific methylglutamate residues introduced into the chemoreceptors (methyl-accepting chemotaxis proteins or MCP) by CheR. Also mediates the irreversible deamidation of specific glutamine residues to glutamic acid. The chain is Protein-glutamate methylesterase/protein-glutamine glutaminase 1 from Methanosarcina acetivorans (strain ATCC 35395 / DSM 2834 / JCM 12185 / C2A).